We begin with the raw amino-acid sequence, 568 residues long: Acetate--CoA ligase CCL3 (568 aa).

ATP-binding positions include 204–212 (TSGTTASPK), 340–345 (HTYGLS), aspartate 437, 449–452 (IKDR), and lysine 547. Residues 272–340 (TAKGVYSAIA…MSEKGFKVAH (69 aa)) are SBD1. The interval 341 to 417 (TYGLSETYGP…MRGNAVMKGY (77 aa)) is SBD2.

The protein belongs to the ATP-dependent AMP-binding enzyme family. As to expression, mostly expressed in glandular trichomes (lupulin glands) after flowering and in old leaves, and, to a lower extent, in stems, young leaves, cones and flowers.

It localises to the cytoplasm. The protein resides in the cytosol. The enzyme catalyses acetate + ATP + CoA = acetyl-CoA + AMP + diphosphate. The catalysed reaction is propanoate + ATP + CoA = propanoyl-CoA + AMP + diphosphate. It catalyses the reaction butanoate + ATP + CoA = butanoyl-CoA + AMP + diphosphate. It carries out the reaction 3-methylbutanoate + ATP + CoA = 3-methylbutanoyl-CoA + AMP + diphosphate. The enzyme catalyses pentanoate + ATP + CoA = pentanoyl-CoA + AMP + diphosphate. The catalysed reaction is hexanoate + ATP + CoA = hexanoyl-CoA + AMP + diphosphate. It catalyses the reaction 2-methylpropanoate + ATP + CoA = 2-methylpropanoyl-CoA + AMP + diphosphate. It carries out the reaction 2-methylbutanoate + ATP + CoA = 2-methylbutanoyl-CoA + AMP + diphosphate. The enzyme catalyses 2-methylpentanoate + ATP + CoA = 2-methylpentanoyl-CoA + AMP + diphosphate. The catalysed reaction is 3-methylpentanoate + ATP + CoA = 3-methylpentanoyl-CoA + AMP + diphosphate. It catalyses the reaction 4-methylpentanoate + ATP + CoA = 4-methylpentanoyl-CoA + AMP + diphosphate. Its pathway is secondary metabolite biosynthesis. Involved in the biosynthesis of prenylated phenolics natural products which contribute to the bitter taste of beer and display broad biological activities. Catalyzes the ligation of CoA on propanoate to produce propanoyl-CoA. Can also use 2-methylpropanoate (isobutyric acid), acetate, butanoate, isovalerate, pentanoate, hexanoate, 2-methylbutanoate, 2-methylpentanoate, 3-methylpentanoate and 4-methylpentanoate as substrates with a lower efficiency. Triggers the formation of very short chain acyl-CoAs from the corresponding fatty acids, including acetic acid, propanoic acid, butyric acid and its isomer. This chain is Acetate--CoA ligase CCL3, found in Humulus lupulus (European hop).